The sequence spans 128 residues: Aspartate 1-decarboxylase (128 aa).

Ser25 serves as the catalytic Schiff-base intermediate with substrate; via pyruvic acid. The residue at position 25 (Ser25) is a Pyruvic acid (Ser). Position 57 (Thr57) interacts with substrate. The Proton donor role is filled by Tyr58. Residue 73–75 (GSA) participates in substrate binding.

It belongs to the PanD family. As to quaternary structure, heterooctamer of four alpha and four beta subunits. Requires pyruvate as cofactor. Is synthesized initially as an inactive proenzyme, which is activated by self-cleavage at a specific serine bond to produce a beta-subunit with a hydroxyl group at its C-terminus and an alpha-subunit with a pyruvoyl group at its N-terminus.

The protein resides in the cytoplasm. It catalyses the reaction L-aspartate + H(+) = beta-alanine + CO2. The protein operates within cofactor biosynthesis; (R)-pantothenate biosynthesis; beta-alanine from L-aspartate: step 1/1. In terms of biological role, catalyzes the pyruvoyl-dependent decarboxylation of aspartate to produce beta-alanine. In Burkholderia cenocepacia (strain HI2424), this protein is Aspartate 1-decarboxylase.